A 406-amino-acid polypeptide reads, in one-letter code: Elongation factor Tu (406 aa).

The tr-type G domain maps to lysine 10 to valine 215. The G1 stretch occupies residues glycine 19 to threonine 26. GTP is bound at residue glycine 19 to threonine 26. Position 26 (threonine 26) interacts with Mg(2+). Positions glycine 61–asparagine 65 are G2. The interval aspartate 82–glycine 85 is G3. Residues aspartate 82–histidine 86 and asparagine 137–aspartate 140 contribute to the GTP site. The tract at residues asparagine 137 to aspartate 140 is G4. Residues serine 175–leucine 177 form a G5 region.

Belongs to the TRAFAC class translation factor GTPase superfamily. Classic translation factor GTPase family. EF-Tu/EF-1A subfamily. In terms of assembly, monomer.

It is found in the cytoplasm. The enzyme catalyses GTP + H2O = GDP + phosphate + H(+). Its function is as follows. GTP hydrolase that promotes the GTP-dependent binding of aminoacyl-tRNA to the A-site of ribosomes during protein biosynthesis. This chain is Elongation factor Tu, found in Thermus aquaticus.